The sequence spans 99 residues: Protein NCBP2AS2 (99 aa).

The disordered stretch occupies residues 76–99; the sequence is ELRRGLRGRSGPPPGSQRGPGANI.

In Homo sapiens (Human), this protein is Protein NCBP2AS2.